A 450-amino-acid chain; its full sequence is Sorting nexin-4 (450 aa).

The residue at position 1 (Met-1) is an N-acetylmethionine. Positions 1–53 (MEQAAPDPERLWQPAPLEPLSHPDAGLESMVGEETKGARDEGPGDGTMTENNF) are disordered. A compositionally biased stretch (basic and acidic residues) spans 33–42 (EETKGARDEG). The 127-residue stretch at 61–187 (SVSEAEKRTG…YLFLTQEGNW (127 aa)) folds into the PX domain. A 1,2-diacyl-sn-glycero-3-phospho-(1D-myo-inositol-3-phosphate) is bound by residues Arg-106, Ser-108, Lys-132, and Arg-154.

Belongs to the sorting nexin family. Heterodimer; heterodimerizes with SNX7 or SNX30. Interacts with WWC1/KIBRA. Identified in a complex with WWC1/KIBRA and dynein components DYNLL1 and DYNC1I2. Interacts with BIN1.

It is found in the early endosome. It localises to the early endosome membrane. In terms of biological role, involved in the regulation of endocytosis and in several stages of intracellular trafficking. Plays a role in recycling endocytosed transferrin receptor and prevent its degradation. Involved in autophagosome assembly by regulating trafficking and recycling of phospholipid scramblase ATG9A. This is Sorting nexin-4 from Bos taurus (Bovine).